A 200-amino-acid polypeptide reads, in one-letter code: NADH-quinone oxidoreductase subunit B (200 aa).

4 residues coordinate [4Fe-4S] cluster: Cys-79, Cys-80, Cys-144, and Cys-174.

It belongs to the complex I 20 kDa subunit family. In terms of assembly, NDH-1 is composed of 14 different subunits. Subunits NuoB, C, D, E, F, and G constitute the peripheral sector of the complex. [4Fe-4S] cluster is required as a cofactor.

The protein resides in the cell inner membrane. The enzyme catalyses a quinone + NADH + 5 H(+)(in) = a quinol + NAD(+) + 4 H(+)(out). Functionally, NDH-1 shuttles electrons from NADH, via FMN and iron-sulfur (Fe-S) centers, to quinones in the respiratory chain. The immediate electron acceptor for the enzyme in this species is believed to be ubiquinone. Couples the redox reaction to proton translocation (for every two electrons transferred, four hydrogen ions are translocated across the cytoplasmic membrane), and thus conserves the redox energy in a proton gradient. This Caulobacter vibrioides (strain NA1000 / CB15N) (Caulobacter crescentus) protein is NADH-quinone oxidoreductase subunit B.